The primary structure comprises 482 residues: Aspartyl/glutamyl-tRNA(Asn/Gln) amidotransferase subunit B (482 aa).

It belongs to the GatB/GatE family. GatB subfamily. Heterotrimer of A, B and C subunits.

It catalyses the reaction L-glutamyl-tRNA(Gln) + L-glutamine + ATP + H2O = L-glutaminyl-tRNA(Gln) + L-glutamate + ADP + phosphate + H(+). The enzyme catalyses L-aspartyl-tRNA(Asn) + L-glutamine + ATP + H2O = L-asparaginyl-tRNA(Asn) + L-glutamate + ADP + phosphate + 2 H(+). Functionally, allows the formation of correctly charged Asn-tRNA(Asn) or Gln-tRNA(Gln) through the transamidation of misacylated Asp-tRNA(Asn) or Glu-tRNA(Gln) in organisms which lack either or both of asparaginyl-tRNA or glutaminyl-tRNA synthetases. The reaction takes place in the presence of glutamine and ATP through an activated phospho-Asp-tRNA(Asn) or phospho-Glu-tRNA(Gln). The protein is Aspartyl/glutamyl-tRNA(Asn/Gln) amidotransferase subunit B of Thermotoga sp. (strain RQ2).